A 381-amino-acid chain; its full sequence is MTTNIRKTHPLIKIVNHALVDLPSPSNISIWWNFGSLLGLCLIIQILTGLFLAMHYTADISTAFSSVVHICRDVNYGWLIRNIHANGASLFFICVYLHIARGLYYGSYLFKEAWNIGVILLFLLMATAFVGYVLPWGQMSFWGATVITNLLSAFPYIGDMLVQWIWGGFSIDNATLTRFFAFHFLLPFLIVGLTLIHLLFLHETGSNNPMGLNSDMDKISFHPYFSYKDLLGFFLMIILLALLALFLPNLLGDAENFIPANPLVTPPHIKPEWYFLFAYAILRSIPNKLGGVLALLFSIFILMLIPMLHTSKQRSNIFRPMTQFLFWTLVANAIILTWIGGQPVEQPFILVGQIASVTYFSLFLIIIPLTGWWENKMLNLN.

Transmembrane regions (helical) follow at residues 34–54 (FGSLLGLCLIIQILTGLFLAM), 78–99 (WLIRNIHANGASLFFICVYLHI), 114–134 (WNIGVILLFLLMATAFVGYVL), and 179–199 (FFAFHFLLPFLIVGLTLIHLL). The heme b site is built by His-84 and His-98. Heme b is bound by residues His-183 and His-197. His-202 serves as a coordination point for a ubiquinone. A run of 4 helical transmembrane segments spans residues 227–247 (YKDLLGFFLMIILLALLALFL), 289–309 (LGGVLALLFSIFILMLIPMLH), 321–341 (MTQFLFWTLVANAIILTWIGG), and 348–368 (FILVGQIASVTYFSLFLIIIP).

Belongs to the cytochrome b family. The cytochrome bc1 complex contains 3 respiratory subunits (MT-CYB, CYC1 and UQCRFS1), 2 core proteins (UQCRC1 and UQCRC2) and probably 6 low-molecular weight proteins. The cofactor is heme b.

It is found in the mitochondrion inner membrane. Functionally, component of the ubiquinol-cytochrome c reductase complex (complex III or cytochrome b-c1 complex) that is part of the mitochondrial respiratory chain. The b-c1 complex mediates electron transfer from ubiquinol to cytochrome c. Contributes to the generation of a proton gradient across the mitochondrial membrane that is then used for ATP synthesis. This Squalus acanthias (Spiny dogfish) protein is Cytochrome b (mt-cyb).